Reading from the N-terminus, the 292-residue chain is tRNA pseudouridine synthase B (292 aa).

Asp-38 acts as the Nucleophile in catalysis.

It belongs to the pseudouridine synthase TruB family. Type 1 subfamily.

It carries out the reaction uridine(55) in tRNA = pseudouridine(55) in tRNA. In terms of biological role, responsible for synthesis of pseudouridine from uracil-55 in the psi GC loop of transfer RNAs. The sequence is that of tRNA pseudouridine synthase B from Gloeobacter violaceus (strain ATCC 29082 / PCC 7421).